We begin with the raw amino-acid sequence, 85 residues long: Electron transfer flavoprotein regulatory factor 1 homolog (85 aa).

The protein belongs to the complex I LYR family. In terms of tissue distribution, highly expressed in the larval fat body.

It is found in the mitochondrion. Acts as a regulator of the electron transfer flavoprotein by promoting the removal of flavin from the ETF holoenzyme. May act with the ETF complex to coordinate lipid homeostasis in the fat body in response to stage-specific demands. The sequence is that of Electron transfer flavoprotein regulatory factor 1 homolog from Drosophila melanogaster (Fruit fly).